A 774-amino-acid chain; its full sequence is Neprilysin-2 (774 aa).

At 1–20 (MQTVIQNPNWWRRRNKLEKS) the chain is on the cytoplasmic side. A helical; Signal-anchor for type II membrane protein membrane pass occupies residues 21-41 (LLVSLGIMFVVLATGFGLWIG). Topologically, residues 42–774 (KVLRTSPPSN…MNPVQKCEVW (733 aa)) are extracellular. The segment at 50–79 (SNPQATALHGDSTTINQVPTGTASKGKSGD) is disordered. Over residues 60–74 (DSTTINQVPTGTASK) the composition is skewed to polar residues. Residues 83–774 (VCLTQECIHT…MNPVQKCEVW (692 aa)) form the Peptidase M13 domain. 5 disulfides stabilise this stretch: C84–C89, C107–C759, C115–C719, C171–C424, and C646–C771. N-linked (GlcNAc...) asparagine glycans are attached at residues N173, N239, N264, N305, N315, N358, and N554. H609 is a binding site for Zn(2+). Residue E610 is part of the active site. H613 serves as a coordination point for Zn(2+). N-linked (GlcNAc...) asparagine glycosylation occurs at N653. E671 is a Zn(2+) binding site. D675 (proton donor) is an active-site residue.

Belongs to the peptidase M13 family. Requires Zn(2+) as cofactor. N-glycosylated. In terms of processing, the soluble form is probably produced by proteolytic cleavage. Detected in the stellate cells in the main segment and the bar-shaped cells in the initial segment of male and female Malpighian tubules (at protein level). Expressed in the spermatheca (at protein level). Expressed in the somatic cyst cells of the testes, with increased expression at the tail end of elongating cysts. Expressed in the ovaries with strong expression in the posterior polar cells and in border cells of stage 8, 9, and 10 follicles. In adults and third-instar larvae, expressed in the brain, ventral ganglion, and stellate cells. Also expressed in the foregut and the imaginal disks (eye, antennal and leg) of third-instar larvae. In stage 17 embryos, expressed in the tracheal system, foregut, hindgut and epidermis. Also expressed in the stellate cell progenitors of the caudal visceral mesoderm in embryos.

The protein localises to the cell membrane. It is found in the secreted. It carries out the reaction Preferential cleavage of polypeptides between hydrophobic residues, particularly with Phe or Tyr at P1'.. In terms of biological role, metalloendoprotease which cleaves peptides such as tachykinin peptide TK-2 at the amino side of hydrophobic residues. Functions in female fertility, embryogenesis and memory formation. Required in females for normal patterns of egg laying, probably due to its function in sperm retention and preventing sperm displacement by rival ejaculates. Also required for normal patterns of hatching due to its important role in early embryonic development. Required in the dorsal paired medial neurons for the proper formation of middle-term memory. Also required in the mushroom body neurons where it functions redundantly with neprilysins Nep3 and Nep4 in normal long-term memory formation. In Drosophila melanogaster (Fruit fly), this protein is Neprilysin-2.